The following is a 523-amino-acid chain: Probable glucose-1-phosphate adenylyltransferase large subunit, chloroplastic (523 aa).

The protein belongs to the bacterial/plant glucose-1-phosphate adenylyltransferase family. As to quaternary structure, heterotetramer.

It localises to the plastid. The protein localises to the chloroplast. The catalysed reaction is alpha-D-glucose 1-phosphate + ATP + H(+) = ADP-alpha-D-glucose + diphosphate. It participates in glycan biosynthesis; starch biosynthesis. With respect to regulation, activated by 3'phosphoglycerate, inhibited by orthophosphate. Allosteric regulation. This protein plays a role in synthesis of starch. It catalyzes the synthesis of the activated glycosyl donor, ADP-glucose from Glc-1-P and ATP. The sequence is that of Probable glucose-1-phosphate adenylyltransferase large subunit, chloroplastic from Arabidopsis thaliana (Mouse-ear cress).